A 157-amino-acid polypeptide reads, in one-letter code: Protein Smg (157 aa).

This sequence belongs to the Smg family.

The sequence is that of Protein Smg from Yersinia pestis (strain Pestoides F).